The primary structure comprises 512 residues: Mucin-13 (512 aa).

A signal peptide spans 1–18; the sequence is MKAIIHLTLLALLSVNTA. Residues 19 to 421 are Extracellular-facing; it reads TNQGNSADAV…GLDCKDKFQL (403 aa). The span at 22-38 shows a compositional bias: polar residues; that stretch reads GNSADAVTTTETATSGP. Disordered stretches follow at residues 22–67 and 133–176; these read GNSA…PTAT and MVPS…PSNP. A compositionally biased stretch (low complexity) spans 53-67; sequence TASTTANTPSFPTAT. A compositionally biased stretch (polar residues) spans 135 to 176; the sequence is PSETQSNNEMSPTTEDNQSSGPPTGTALLETSTLNSTGPSNP. Asn151 and Asn169 each carry an N-linked (GlcNAc...) asparagine glycan. In terms of domain architecture, EGF-like 1 spans 173-211; sequence PSNPCQDDPCADNSLCVKLHNTSFCLCLEGYYYNSSTCK. Intrachain disulfides connect Cys177–Cys188, Cys182–Cys197, and Cys199–Cys210. Residues Asn193, Asn206, Asn284, and Asn332 are each glycosylated (N-linked (GlcNAc...) asparagine). The SEA domain maps to 212 to 336; that stretch reads KGKVFPGKIS…DYYGCNQTAD (125 aa). EGF-like domains lie at 322 to 361 and 363 to 404; these read LTLRCDYYGCNQTADDCLNGLACDCKSDLQRPNPQSPFCV and SSLK…GNCQ. 6 disulfides stabilise this stretch: Cys326–Cys338, Cys331–Cys344, Cys346–Cys360, Cys367–Cys378, Cys371–Cys389, and Cys391–Cys403. A helical transmembrane segment spans residues 422 to 442; the sequence is ILTIVGTIAGIVILSMIIALI. The Cytoplasmic portion of the chain corresponds to 443–512; the sequence is VTARSNNKTK…RHSSMPRPDY (70 aa). A compositionally biased stretch (polar residues) spans 493–505; the sequence is RDSQMQNPYSRHS. Residues 493 to 512 are disordered; sequence RDSQMQNPYSRHSSMPRPDY.

Homodimer of beta subunits. Cleaved into two subunits, alpha and beta, probably between the first EGF domain and the SEA domain. Beta subunit contains the cytoplasmic tail and alpha subunit the extracellular tail. The homooligomerization into dimers is dependent on intrachain disulfide bonds. Post-translationally, highly N-glycosylated. In terms of tissue distribution, highly expressed in epithelial tissues, particularly those of the gastrointestinal and respiratory tracts, such as large intestine and trachea, followed by kidney, small intestine, appendix and stomach.

The protein resides in the cell membrane. It is found in the apical cell membrane. Its subcellular location is the secreted. Its function is as follows. Epithelial and hemopoietic transmembrane mucin that may play a role in cell signaling. The protein is Mucin-13 (MUC13) of Homo sapiens (Human).